The primary structure comprises 524 residues: Secologanin synthase 1 (524 aa).

The Lumenal portion of the chain corresponds to 1-11; it reads MEMDMDTIRKA. A helical membrane pass occupies residues 12 to 32; it reads IAATIFALVMAWAWRVLDWAW. Topologically, residues 33–524 are cytoplasmic; sequence FTPKRIEKRL…SHVIYKKLES (492 aa). Residue C470 participates in heme binding.

The protein belongs to the cytochrome P450 family. It depends on heme as a cofactor. As to expression, upper and lower leaf epidermis.

It localises to the endoplasmic reticulum membrane. The catalysed reaction is loganin + reduced [NADPH--hemoprotein reductase] + O2 = secologanin + oxidized [NADPH--hemoprotein reductase] + 2 H2O + H(+). It carries out the reaction secologanin + reduced [NADPH--hemoprotein reductase] + O2 = secoxyloganin + oxidized [NADPH--hemoprotein reductase] + H2O + 2 H(+). Its pathway is alkaloid biosynthesis; secologanin biosynthesis. Its function is as follows. Component of the seco-iridoid and derivatives monoterpenoid indole alkaloids (MIAs, e.g. secologanin) biosynthesis pathway. Catalyzes the conversion of loganin into secologanin. Catalyzes the conversion of secologanin into secoxyloganin. This Catharanthus roseus (Madagascar periwinkle) protein is Secologanin synthase 1.